Here is a 39-residue protein sequence, read N- to C-terminus: Cytochrome b6-f complex subunit 5 (39 aa).

The helical transmembrane segment at 5 to 25 (LLSGIVLGLVPVTILGLFVTA) threads the bilayer.

It belongs to the PetG family. As to quaternary structure, the 4 large subunits of the cytochrome b6-f complex are cytochrome b6, subunit IV (17 kDa polypeptide, PetD), cytochrome f and the Rieske protein, while the 4 small subunits are PetG, PetL, PetM and PetN. The complex functions as a dimer.

It is found in the plastid. The protein resides in the chloroplast thylakoid membrane. In terms of biological role, component of the cytochrome b6-f complex, which mediates electron transfer between photosystem II (PSII) and photosystem I (PSI), cyclic electron flow around PSI, and state transitions. PetG is required for either the stability or assembly of the cytochrome b6-f complex. This is Cytochrome b6-f complex subunit 5 from Pleurastrum terricola (Filamentous green alga).